We begin with the raw amino-acid sequence, 344 residues long: Laforin, isoform 9 (344 aa).

4 disordered regions span residues 1–44 (MHPK…PGPG), 58–134 (GGGA…PRGH), 158–188 (PAPG…RRAS), and 320–344 (SLKK…QCAT). The span at 77–88 (AARAGALGAARC) shows a compositional bias: low complexity. Over residues 101 to 131 (RGPGPAGAGPVARGGGAGGRGGGAGRGGAGP) the composition is skewed to gly residues. Residues 179-188 (RPRRPRRRAS) show a composition bias toward basic residues.

As to quaternary structure, interacts with isoform 1 and isoform 2.

It localises to the nucleus. This Homo sapiens (Human) protein is Laforin, isoform 9.